Here is a 326-residue protein sequence, read N- to C-terminus: Probable sodium/potassium-transporting ATPase subunit beta-3 (326 aa).

Residues 1–59 (MMSSRTRKIYLFVFMFISTSLQLMNGEAKAEPETFRQFLYNKQKGTVLGRTGTSWCQIT) lie on the Cytoplasmic side of the membrane. Residues 60 to 80 (VFYIIFYIFLSAFFIGCLAIF) form a helical; Signal-anchor for type II membrane protein membrane-spanning segment. Topologically, residues 81-326 (LKTLDPKVPR…DKKPVAAPAA (246 aa)) are lumenal. N-linked (GlcNAc...) asparagine glycosylation is found at Asn-144 and Asn-147. Cys-234 and Cys-291 are disulfide-bonded.

This sequence belongs to the X(+)/potassium ATPases subunit beta family. The sodium/potassium-transporting ATPase is composed of a catalytic alpha subunit, an auxiliary non-catalytic beta subunit and an additional regulatory subunit.

Its subcellular location is the cell membrane. In terms of biological role, this is the non-catalytic component of the active enzyme, which catalyzes the hydrolysis of ATP coupled with the exchange of Na(+) and K(+) ions across the plasma membrane. The beta subunit regulates, through assembly of alpha/beta heterodimers, the number of sodium pumps transported to the plasma membrane. Implicated in genomic response to various soil bacteria that affects fitness, lifespan and brood size. The chain is Probable sodium/potassium-transporting ATPase subunit beta-3 (nkb-3) from Caenorhabditis briggsae.